The sequence spans 599 residues: Adenine deaminase (599 aa).

The protein belongs to the metallo-dependent hydrolases superfamily. Adenine deaminase family. Requires Mn(2+) as cofactor.

It catalyses the reaction adenine + H2O + H(+) = hypoxanthine + NH4(+). This is Adenine deaminase from Clostridium botulinum (strain ATCC 19397 / Type A).